The primary structure comprises 192 residues: Pyridoxal 5'-phosphate synthase subunit PdxT (192 aa).

53–55 (GES) is a binding site for L-glutamine. C82 (nucleophile) is an active-site residue. L-glutamine contacts are provided by residues R108 and 134–135 (IR). Residues H170 and E172 each act as charge relay system in the active site.

Belongs to the glutaminase PdxT/SNO family. In the presence of PdxS, forms a dodecamer of heterodimers. Only shows activity in the heterodimer.

It catalyses the reaction aldehydo-D-ribose 5-phosphate + D-glyceraldehyde 3-phosphate + L-glutamine = pyridoxal 5'-phosphate + L-glutamate + phosphate + 3 H2O + H(+). It carries out the reaction L-glutamine + H2O = L-glutamate + NH4(+). It functions in the pathway cofactor biosynthesis; pyridoxal 5'-phosphate biosynthesis. In terms of biological role, catalyzes the hydrolysis of glutamine to glutamate and ammonia as part of the biosynthesis of pyridoxal 5'-phosphate. The resulting ammonia molecule is channeled to the active site of PdxS. This chain is Pyridoxal 5'-phosphate synthase subunit PdxT, found in Methanosphaera stadtmanae (strain ATCC 43021 / DSM 3091 / JCM 11832 / MCB-3).